The sequence spans 701 residues: Elongation factor G (701 aa).

The region spanning 8 to 290 (KHYRNIGISA…AVIEYLPAPI (283 aa)) is the tr-type G domain. GTP contacts are provided by residues 17-24 (AHIDAGKT), 88-92 (DTPGH), and 142-145 (NKMD).

This sequence belongs to the TRAFAC class translation factor GTPase superfamily. Classic translation factor GTPase family. EF-G/EF-2 subfamily.

It is found in the cytoplasm. Its function is as follows. Catalyzes the GTP-dependent ribosomal translocation step during translation elongation. During this step, the ribosome changes from the pre-translocational (PRE) to the post-translocational (POST) state as the newly formed A-site-bound peptidyl-tRNA and P-site-bound deacylated tRNA move to the P and E sites, respectively. Catalyzes the coordinated movement of the two tRNA molecules, the mRNA and conformational changes in the ribosome. In Hamiltonella defensa subsp. Acyrthosiphon pisum (strain 5AT), this protein is Elongation factor G.